A 387-amino-acid chain; its full sequence is Sharpin (387 aa).

Residues 1 to 180 are self-association; the sequence is MAPPAGGAAA…EREELAGSLA (180 aa). Positions 122–132 are enriched in polar residues; it reads EGQNGSKSNSP. Residues 122–169 are disordered; that stretch reads EGQNGSKSNSPPALGPEACPVSLPSPPEASTLKGPPPEADLPRSPGNL. The residue at position 165 (Ser-165) is a Phosphoserine. An interaction with SHANK1 region spans residues 175-310; that stretch reads LAGSLARAIA…SAPREAPATG (136 aa). The Ubiquitin-like domain occupies 219–288; that stretch reads IRLQVTLEDA…PERSLASYGV (70 aa). Residues 305–349 form a disordered region; the sequence is EAPATGPSPQHPQKMDGELGRLFPPSLGLPPGPQPAASSLPSPLQ. Ser-312 bears the Phosphoserine mark. A compositionally biased stretch (low complexity) spans 339–349; sequence PAASSLPSPLQ. The RanBP2-type zinc-finger motif lies at 348 to 377; the sequence is LQPSWSCPSCTFINAPDRPGCEMCSTQRPC.

As to quaternary structure, monomer and homodimer. Component of the LUBAC complex (linear ubiquitin chain assembly complex) which consists of SHARPIN, RBCK1 and RNF31. LUBAC has a MW of approximately 600 kDa suggesting a heteromultimeric assembly of its subunits. Associates with the TNF-R1 signaling complex (TNF-RSC) in a stimulation-dependent manner. Interacts with EYA1, EYA2, SHANK1 and SHANK3 (via ANK repeats). As to expression, highly expressed in skeletal muscle and placenta and at lower levels in brain, heart, colon without mucosa, thymus, spleen, kidney, liver, small intestine, lung and peripheral blood leukocytes. Up-regulated in various tumor tissues such as kidney, liver, ovary and pancreas tumors.

The protein resides in the cytoplasm. Its subcellular location is the cytosol. It is found in the synapse. It participates in protein modification; protein ubiquitination. Component of the LUBAC complex which conjugates linear polyubiquitin chains in a head-to-tail manner to substrates and plays a key role in NF-kappa-B activation and regulation of inflammation. LUBAC conjugates linear polyubiquitin to IKBKG and RIPK1 and is involved in activation of the canonical NF-kappa-B and the JNK signaling pathways. Linear ubiquitination mediated by the LUBAC complex interferes with TNF-induced cell death and thereby prevents inflammation. LUBAC is recruited to the TNF-R1 signaling complex (TNF-RSC) following polyubiquitination of TNF-RSC components by BIRC2 and/or BIRC3 and to conjugate linear polyubiquitin to IKBKG and possibly other components contributing to the stability of the complex. The LUBAC complex is also involved in innate immunity by conjugating linear polyubiquitin chains at the surface of bacteria invading the cytosol to form the ubiquitin coat surrounding bacteria. LUBAC is not able to initiate formation of the bacterial ubiquitin coat, and can only promote formation of linear polyubiquitins on pre-existing ubiquitin. The bacterial ubiquitin coat acts as an 'eat-me' signal for xenophagy and promotes NF-kappa-B activation. Together with OTULIN, the LUBAC complex regulates the canonical Wnt signaling during angiogenesis. The sequence is that of Sharpin from Homo sapiens (Human).